Here is a 164-residue protein sequence, read N- to C-terminus: Transcriptional repressor NrdR (164 aa).

The segment at 3–34 (CPKCNYHKSSVVDSRQAEDGNTIRRRRECEQC) is a zinc-finger region. The ATP-cone domain maps to 49-139 (LLVIKKDGTR…VYKSFKDVDE (91 aa)).

Belongs to the NrdR family. It depends on Zn(2+) as a cofactor.

Negatively regulates transcription of bacterial ribonucleotide reductase nrd genes and operons by binding to NrdR-boxes. The sequence is that of Transcriptional repressor NrdR from Streptococcus pyogenes serotype M5 (strain Manfredo).